An 872-amino-acid polypeptide reads, in one-letter code: MKELSSAQIRQMWLDFWKSKGHSVEPSANLVPVNDPTLLWINSGVATLKKYFDGSVIPENPRITNAQKSIRTNDIENVGKTARHHTMFEMLGNFSIGDYFRDEAIEWGFELLTSPEWFDFPKDKLYMTYYPDDKDSYNRWIACGVEPSHLVPIEDNFWEIGAGPSGPDTEIFFDRGEDFDPENIGLRLLAEDIENDRYIEIWNIVLSQFNADPAVPRSEYKELPNKNIDTGAGLERLAAVMQGAKTNFETDLFMPIIREVEKLSGKTYDPDGDNMSFKVIADHIRALSFAIGDGALPGNEGRGYVLRRLLRRAVMHGRRLGINETFLYKLVPTVGQIMESYYPEVLEKRDFIEKIVKREEETFARTIDAGSGHLDSLLAQLKAEGKDTLEGKDIFKLYDTYGFPVELTEELAEDAGYKIDHEGFKSAMKEQQDRARAAVVKGGSMGMQNETLAGIVEESRFEYDTYSLESSLSVIIADNERTEAVSEGQALLVFAQTPFYAEMGGQVADHGVIKNDKGDTVAEVVDVQKAPNGQPLHTVNVLASLSVGTNYTLEINKERRLAVEKNHTATHLLHAALHNVIGEHATQAGSLNEEEFLRFDFTHFEAVSNEELRHIEQEVNEQIWNDLTITTTETDVETAKEMGAMALFGEKYGKVVRVVQIGNYSVELCGGTHLNNSSEIGLFKIVKEEGIGSGTRRIIAVTGRQAFEAYRNQEDALKEIAATVKAPQLKDAAAKVQALSDSLRDLQKENVELKEKAAAAAAGDVFKDIQEAKGVRFIASQVDVADAGALRTFADNWKQKDYSDVLVLVAAIGEKVNVLVASKTKDVHAGNMIKGLAPIVAGRGGGKPDMAMAGGSDASKIAELLAAVAENL.

Positions 567, 571, 669, and 673 each coordinate Zn(2+).

This sequence belongs to the class-II aminoacyl-tRNA synthetase family. Requires Zn(2+) as cofactor.

The protein localises to the cytoplasm. It catalyses the reaction tRNA(Ala) + L-alanine + ATP = L-alanyl-tRNA(Ala) + AMP + diphosphate. Functionally, catalyzes the attachment of alanine to tRNA(Ala) in a two-step reaction: alanine is first activated by ATP to form Ala-AMP and then transferred to the acceptor end of tRNA(Ala). Also edits incorrectly charged Ser-tRNA(Ala) and Gly-tRNA(Ala) via its editing domain. This is Alanine--tRNA ligase from Streptococcus agalactiae serotype V (strain ATCC BAA-611 / 2603 V/R).